We begin with the raw amino-acid sequence, 329 residues long: Nuclear pore complex protein NUP35 (329 aa).

Disordered stretches follow at residues 48–105 and 123–167; these read NFGG…GKGK and VSGS…PPRE. The span at 123–139 shows a compositional bias: polar residues; it reads VSGSPSWWSQSKAGSST. Residues 183–264 form the RRM Nup35-type domain; sequence LDEEEWVTVY…KPVDPIQKQA (82 aa). The interval 271–315 is disordered; that stretch reads NQGFMPLPPPSSTRNTARPLSRPQYLQNGSAFSPQPSGGAMASPS. A compositionally biased stretch (polar residues) spans 282–306; the sequence is STRNTARPLSRPQYLQNGSAFSPQP.

Belongs to the Nup35 family. Part of the nuclear pore complex (NPC). The NPC has an eight-fold symmetrical structure comprising a central transport channel and two rings, the cytoplasmic and nuclear rings, to which eight filaments are attached. The cytoplasmic filaments have loose ends, while the nuclear filaments are joined in a distal ring, forming a nuclear basket. NPCs are highly dynamic in configuration and composition, and can be devided in 3 subcomplexes, the NUP62 subcomplex, the NUP107-160 subcomplex and the NUP93 subcomplex, containing approximately 30 different nucleoporin proteins.

It localises to the nucleus. The protein resides in the nuclear pore complex. This is Nuclear pore complex protein NUP35 from Arabidopsis thaliana (Mouse-ear cress).